The chain runs to 73 residues: UPF0154 protein PEPE_0872 (73 aa).

A helical membrane pass occupies residues 5–25 (IWIMIVIIALLVGAVGGFFFA).

This sequence belongs to the UPF0154 family.

The protein localises to the cell membrane. This is UPF0154 protein PEPE_0872 from Pediococcus pentosaceus (strain ATCC 25745 / CCUG 21536 / LMG 10740 / 183-1w).